The sequence spans 273 residues: Zinc finger protein 32 (273 aa).

3 C2H2-type zinc fingers span residues 77 to 99, 105 to 127, and 133 to 155; these read YECQECGKSFRQKGSLTLHERIH, FECTHCGKSFRAKGNLVTHQRIH, and YQCKECGKSFSQRGSLAVHERLH. The Zn(2+) site is built by Cys79, Cys82, His95, His99, Cys107, Cys110, His123, His127, Ser141, Gln144, Gly157, Tyr161, Phe198, Lys201, Leu214, Ala218, Cys247, Cys250, His263, and Cys267. C2H2-type zinc fingers lie at residues 161–183 and 189–211; these read YECAICQRSFRNQSNLAVHRRVH and YRCDQCGKAFSQKGSLIVHIRVH. The C2H2-type 6 zinc-finger motif lies at 217 to 239; it reads YACTQCRKSFHTRGNCILHGKIH. The CCHC-type zinc-finger motif lies at 245–267; sequence YLCGQCGKSFTQRGSLAVHQRSC.

Belongs to the krueppel C2H2-type zinc-finger protein family.

It localises to the nucleus. Its function is as follows. May be involved in transcriptional regulation. The polypeptide is Zinc finger protein 32 (ZNF32) (Homo sapiens (Human)).